Consider the following 215-residue polypeptide: Somatotropin (215 aa).

Residues 1 to 25 (MAPGARISLLLLITFTLLGPQRSGA) form the signal peptide. Residue His44 participates in Zn(2+) binding. A disulfide bond links Cys77 and Cys188. The residue at position 130 (Ser130) is a Phosphoserine. Glu197 is a binding site for Zn(2+). Residues Cys205 and Cys213 are joined by a disulfide bond.

The protein belongs to the somatotropin/prolactin family.

It localises to the secreted. Functionally, plays an important role in growth control. Its major role in stimulating body growth is to stimulate the liver and other tissues to secrete IGF1. It stimulates both the differentiation and proliferation of myoblasts. It also stimulates amino acid uptake and protein synthesis in muscle and other tissues. The protein is Somatotropin (GH1) of Trichosurus vulpecula (Brush-tailed possum).